Consider the following 1090-residue polypeptide: Exocyst complex component SEC5A (1090 aa).

A disordered region spans residues 18 to 128 (LKEQAKRDLT…ARKEDDGAWD (111 aa)). Residues 45–69 (QQPRQQKPVAAAAAPPKKSAAAVRK) show a composition bias toward low complexity. The span at 109–124 (RGSDVREKGRARKEDD) shows a compositional bias: basic and acidic residues. The residue at position 180 (serine 180) is a Phosphoserine. Disordered stretches follow at residues 759–783 (TSRQ…NTYG), 987–1010 (VETP…DKQS), and 1046–1090 (APLE…PRRR). Residues 998–1009 (RGSEDTVSDDKQ) are compositionally biased toward basic and acidic residues. Over residues 1058-1082 (TYSSFRGSMDSPSRNYRGSQSSGSP) the composition is skewed to polar residues.

Belongs to the SEC5 family. As to quaternary structure, the exocyst complex is composed of SEC3, SEC5, SEC6, SEC8, SEC10, EXO70A1 and EXO84B. Interacts with SEC3A and EXO70B1. Binds to EXO70H1 and EXO70B2. Binds directly to B1L.

It is found in the cytoplasm. It localises to the cytosol. Its subcellular location is the secreted. The protein resides in the extracellular exosome. Component of the exocyst complex involved in the docking of exocytic vesicles with fusion sites on the plasma membrane during regulated or polarized secretion. Involved in polarized cell growth and organ morphogenesis. During cytokinesis, involved in cell plate initiation, cell plate maturation and formation of new primary cell wall. Probable component of an exocyst subcomplex specifically involved in autophagy-related, Golgi-independent membrane traffic to the vacuole. Regulates autophagosome formation and autophagy-related Golgi-independent import into the vacuole. This is Exocyst complex component SEC5A from Arabidopsis thaliana (Mouse-ear cress).